A 230-amino-acid chain; its full sequence is MASLKLSPSSPISISKVGVIPSSKKGLSFLVKAEHHSSSSSSHLQDKCQRRLIVTFGVVAPWISLLSRAPLSFAAESKKGFLAVSDNKDAYAFLYPFGWQEVVIEGQDKVYKDVIEPLESVSVNLVPTSKQTIKEFGPPKQIAETLIKKVLAPPNQKTTLIDASEHDVDGKTYYQFEFTVQARNYTRHALGTITVFNGNFYTLTTGANERRWEKMKDRLHTVVDSFKITV.

This sequence belongs to the PsbP family.

Its subcellular location is the plastid. The protein resides in the chloroplast thylakoid lumen. In terms of biological role, required for efficient repair of photodamaged PSII, but not tightly associated with the complex. In Arabidopsis thaliana (Mouse-ear cress), this protein is PsbP-like protein 1, chloroplastic (PPL1).